A 229-amino-acid polypeptide reads, in one-letter code: PHO85 cyclin-5 (229 aa).

Over residues 1 to 24 the composition is skewed to basic and acidic residues; that stretch reads MDGNHRFTPDSKEFNTVVKSKESS. Residues 1-46 form a disordered region; the sequence is MDGNHRFTPDSKEFNTVVKSKESSTGRNPYQTPPLEHNGTHHQTNY.

It belongs to the cyclin family. PCL1,2 subfamily. In terms of assembly, forms a cyclin-CDK complex with PHO85.

Its function is as follows. Cyclin partner of the cyclin-dependent kinase (CDK) PHO85. Positively controls degradation of transcription factor GCN4 under favorable growth conditions. The PCL5-PHO85 cyclin-CDK holoenzyme phosphorylates GCN4, which is required for its degradation by the E3 ubiquitin ligase complex SCF(Cdc4). Amino acid starvation reduces PCL5-PHO85-associated GCN4 kinase activity and leads to stabilization of GCN4. The chain is PHO85 cyclin-5 (PCL5) from Saccharomyces cerevisiae (strain ATCC 204508 / S288c) (Baker's yeast).